Here is a 310-residue protein sequence, read N- to C-terminus: Putative S-adenosyl-L-methionine-dependent methyltransferase MAP_2076c (310 aa).

Residues Asp131 and 160–161 (DL) each bind S-adenosyl-L-methionine.

The protein belongs to the UPF0677 family.

Its function is as follows. Exhibits S-adenosyl-L-methionine-dependent methyltransferase activity. This Mycolicibacterium paratuberculosis (strain ATCC BAA-968 / K-10) (Mycobacterium paratuberculosis) protein is Putative S-adenosyl-L-methionine-dependent methyltransferase MAP_2076c.